Reading from the N-terminus, the 249-residue chain is MKILVSNDDGYQAQGIIELAQSLAQEHEVIVVAPSENKSAASSSLTLDKPLRPIQISNNVYCIDATPSDCVHLALCGFLNEEIDLVVTGINFGANLGDDVIYSGTVAGAIEGRFLGLPSLSISLASWRGQHFKTAGIVIRQLINQISHAHLSYGTVLNINVPDVIFSDIKGFQTTRLGKRHMSEQSVIDKNDSSLYWIGENGKEADNGVGTDFHAITNHYVSITPLQTDLTKYNEINTVSTWLNQIITT.

4 residues coordinate a divalent metal cation: aspartate 8, aspartate 9, serine 39, and asparagine 91.

Belongs to the SurE nucleotidase family. A divalent metal cation is required as a cofactor.

Its subcellular location is the cytoplasm. It catalyses the reaction a ribonucleoside 5'-phosphate + H2O = a ribonucleoside + phosphate. Its function is as follows. Nucleotidase that shows phosphatase activity on nucleoside 5'-monophosphates. The protein is 5'-nucleotidase SurE of Vesicomyosocius okutanii subsp. Calyptogena okutanii (strain HA).